The primary structure comprises 233 residues: uncharacterized protein (233 aa).

Residues H64, H66, D68, H69, H143, D162, and H212 each contribute to the Zn(2+) site.

It belongs to the metallo-beta-lactamase superfamily. Glyoxalase II family. Requires Zn(2+) as cofactor.

This is an uncharacterized protein from Bacillus subtilis (strain 168).